The following is a 229-amino-acid chain: Putative germin-like protein 3-4 (229 aa).

Residues 1–31 (MEHSFKTITAGVVFVVLLLQQAPVLIRATDA) form the signal peptide. An intrachain disulfide couples C38 to C53. One can recognise a Cupin type-1 domain in the interval 67–219 (SKIATGGDVN…ALRVDTGVVE (153 aa)). Residues N80 and N83 are each glycosylated (N-linked (GlcNAc...) asparagine). Mn(2+) contacts are provided by H116, H118, E123, and H165.

This sequence belongs to the germin family. As to quaternary structure, oligomer (believed to be a pentamer but probably hexamer).

Its subcellular location is the secreted. The protein localises to the extracellular space. It localises to the apoplast. May play a role in plant defense. Probably has no oxalate oxidase activity even if the active site is conserved. The polypeptide is Putative germin-like protein 3-4 (Oryza sativa subsp. japonica (Rice)).